Consider the following 413-residue polypeptide: Multifunctional CCA protein (413 aa).

ATP-binding residues include glycine 8 and arginine 11. Glycine 8 and arginine 11 together coordinate CTP. Residues aspartate 21 and aspartate 23 each coordinate Mg(2+). Positions 91, 137, and 140 each coordinate ATP. Arginine 91, arginine 137, and arginine 140 together coordinate CTP. The region spanning 228–329 (TGIHTLMVLA…IKIFDKADLW (102 aa)) is the HD domain.

Belongs to the tRNA nucleotidyltransferase/poly(A) polymerase family. Bacterial CCA-adding enzyme type 1 subfamily. As to quaternary structure, monomer. Can also form homodimers and oligomers. Mg(2+) serves as cofactor. It depends on Ni(2+) as a cofactor.

It carries out the reaction a tRNA precursor + 2 CTP + ATP = a tRNA with a 3' CCA end + 3 diphosphate. The enzyme catalyses a tRNA with a 3' CCA end + 2 CTP + ATP = a tRNA with a 3' CCACCA end + 3 diphosphate. Its function is as follows. Catalyzes the addition and repair of the essential 3'-terminal CCA sequence in tRNAs without using a nucleic acid template. Adds these three nucleotides in the order of C, C, and A to the tRNA nucleotide-73, using CTP and ATP as substrates and producing inorganic pyrophosphate. tRNA 3'-terminal CCA addition is required both for tRNA processing and repair. Also involved in tRNA surveillance by mediating tandem CCA addition to generate a CCACCA at the 3' terminus of unstable tRNAs. While stable tRNAs receive only 3'-terminal CCA, unstable tRNAs are marked with CCACCA and rapidly degraded. The polypeptide is Multifunctional CCA protein (Shewanella woodyi (strain ATCC 51908 / MS32)).